We begin with the raw amino-acid sequence, 96 residues long: Iron-sulfur cluster assembly protein CyaY (96 aa).

Belongs to the frataxin family.

Its function is as follows. Involved in iron-sulfur (Fe-S) cluster assembly. May act as a regulator of Fe-S biogenesis. This Rickettsia bellii (strain RML369-C) protein is Iron-sulfur cluster assembly protein CyaY.